We begin with the raw amino-acid sequence, 130 residues long: MPKQVIIPPGTTTPIAPFVPGTLADGVVYVSGTLPFDKQNNVVHIGDPKAQTRHVLETIKSVIETAGGSMADVTFNSIFITDWTNYAAINEVYAEFFPGDKPARFCIQCGLVKPDALVEIASVAHIGTPT.

It belongs to the RutC family.

The enzyme catalyses (Z)-3-aminoacrylate + H2O + H(+) = 3-oxopropanoate + NH4(+). Functionally, involved in pyrimidine catabolism. Catalyzes the deamination of 3-aminoacrylate to malonic semialdehyde, a reaction that can also occur spontaneously. RutC may facilitate the reaction and modulate the metabolic fitness, rather than catalyzing essential functions. The polypeptide is 3-aminoacrylate deaminase RutC (Klebsiella variicola (strain At-22)).